Consider the following 307-residue polypeptide: Peroxisomal membrane protein PMP34 (307 aa).

Topologically, residues 1 to 9 are cytoplasmic; sequence MASVLSYES. The necessary for targeting to peroxisomes and interaction with PEX19 stretch occupies residues 1-147; that stretch reads MASVLSYESL…NEDIIPTNYK (147 aa). Solcar repeat units follow at residues 7 to 92, 99 to 192, and 200 to 294; these read YESL…LKAV, SSTG…LKRQ, and LSSL…LTAA. The chain crosses the membrane as a helical span at residues 10–30; it reads LVHAVAGAVGSVTAMTVFFPL. Residues 31 to 66 are Lumenal-facing; the sequence is DTARLRLQVDEKRKSKTTHAVLLEIIKEEGLLAPYR. The helical transmembrane segment at 67–87 threads the bilayer; sequence GWFPVISSLCCSNFVYFYTFN. At 88–104 the chain is on the cytoplasmic side; the sequence is SLKAVWVKGQRSSTGKD. The helical transmembrane segment at 105–125 threads the bilayer; the sequence is LVVGFVAGVVNVLLTTPLWVV. Residues 126 to 160 are Lumenal-facing; sequence NTRLKLQGAKFRNEDIIPTNYKGIIDAFHQIIRDE. Residues 161–181 form a helical membrane-spanning segment; the sequence is GILALWNGTFPSLLLVFNPAI. Topologically, residues 182–202 are cytoplasmic; sequence QFMFYEGLKRQLLKKRMKLSS. The Peroxisome localization signal signature appears at 190–199; it reads KRQLLKKRMK. The chain crosses the membrane as a helical span at residues 203–223; that stretch reads LDVFIIGAIAKAIATTVTYPM. Residues 224–280 are Lumenal-facing; sequence QTVQSILRFGRHRLNPENRTLGSLRNVLSLLHQRVKRFGIMGLYKGLEAKLLQTVLT. Residues 244–307 form a necessary for targeting to peroxisomes and interaction with PEX19 region; sequence LGSLRNVLSL…VMGLKSTHKH (64 aa). A helical transmembrane segment spans residues 281–301; that stretch reads AALMFLVYEKLTAATFTVMGL. The Cytoplasmic segment spans residues 302 to 307; it reads KSTHKH.

This sequence belongs to the mitochondrial carrier (TC 2.A.29) family. As to quaternary structure, interacts (via N- and C-terminus peroxisomal targeting regions) with PEX19; the interaction occurs with the newly synthesized SLC25A17 in the cytosol. In terms of tissue distribution, expressed in liver, kidney, heart, spleen, muscle and lung.

It is found in the cytoplasm. The protein resides in the peroxisome membrane. The enzyme catalyses AMP(out) + CoA(in) = AMP(in) + CoA(out). It catalyses the reaction 3'-dephospho-CoA(in) + AMP(out) = 3'-dephospho-CoA(out) + AMP(in). It carries out the reaction acetyl-CoA(in) + AMP(out) = acetyl-CoA(out) + AMP(in). The catalysed reaction is AMP(in) + NAD(+)(out) = AMP(out) + NAD(+)(in). The enzyme catalyses FAD(in) + AMP(out) = FAD(out) + AMP(in). It catalyses the reaction FMN(in) + AMP(out) = FMN(out) + AMP(in). It carries out the reaction AMP(in) + ADP(out) = AMP(out) + ADP(in). The catalysed reaction is adenosine 3',5'-bisphosphate(in) + AMP(out) = adenosine 3',5'-bisphosphate(out) + AMP(in). The enzyme catalyses FAD(in) + CoA(out) = FAD(out) + CoA(in). It catalyses the reaction FAD(in) + adenosine 3',5'-bisphosphate(out) = FAD(out) + adenosine 3',5'-bisphosphate(in). It carries out the reaction FMN(in) + CoA(out) = FMN(out) + CoA(in). The catalysed reaction is FMN(in) + adenosine 3',5'-bisphosphate(out) = FMN(out) + adenosine 3',5'-bisphosphate(in). The enzyme catalyses FAD(out) + NAD(+)(in) = FAD(in) + NAD(+)(out). It catalyses the reaction FMN(out) + NAD(+)(in) = FMN(in) + NAD(+)(out). It carries out the reaction NAD(+)(in) + CoA(out) = NAD(+)(out) + CoA(in). The catalysed reaction is adenosine 3',5'-bisphosphate(out) + NAD(+)(in) = adenosine 3',5'-bisphosphate(in) + NAD(+)(out). The enzyme catalyses FMN(out) + ADP(in) = FMN(in) + ADP(out). It catalyses the reaction FAD(out) + ADP(in) = FAD(in) + ADP(out). It carries out the reaction ADP(out) + CoA(in) = ADP(in) + CoA(out). The catalysed reaction is adenosine 3',5'-bisphosphate(in) + ADP(out) = adenosine 3',5'-bisphosphate(out) + ADP(in). Functionally, peroxisomal transporter for multiple cofactors like coenzyme A (CoA), flavin adenine dinucleotide (FAD), flavin mononucleotide (FMN) and nucleotide adenosine monophosphate (AMP), and to a lesser extent for nicotinamide adenine dinucleotide (NAD(+)), adenosine diphosphate (ADP) and adenosine 3',5'-diphosphate (PAP). May catalyze the transport of free CoA, FAD and NAD(+) from the cytosol into the peroxisomal matrix by a counter-exchange mechanism. This is Peroxisomal membrane protein PMP34 (Slc25a17) from Mus musculus (Mouse).